The chain runs to 244 residues: DNA repair protein RecO (244 aa).

This sequence belongs to the RecO family.

Involved in DNA repair and RecF pathway recombination. The polypeptide is DNA repair protein RecO (Caldicellulosiruptor bescii (strain ATCC BAA-1888 / DSM 6725 / KCTC 15123 / Z-1320) (Anaerocellum thermophilum)).